The sequence spans 285 residues: Protein phosphatase 1 regulatory subunit 3C (285 aa).

Residues 72–75 (KVVF) carry the PP1-binding motif motif. The CBM21 domain maps to 133-241 (RKRLMKNSVC…NNNGKNYALV (109 aa)).

In terms of assembly, interacts with PPP1CC catalytic subunit of PP1 and associates with glycogen. Forms complexes with glycogen phosphorylase, glycogen synthase and phosphorylase kinase which is necessary for its regulation of PP1 activity. As to expression, ubiquitously expressed in the examined tissues including brain, muscle, liver and spleen under normoxic condition. Its expression is higher in insulin sensitive tissues (liver and muscle) than in the brain and spleen. Significantly increased expression in the liver and muscle under short-term (1-12 hours) hypoxia exposure. Significantly increased expression after long-term (natural) hypoxia exposure in liver and spleen. No significant differences in expression in brain for any time periods.

Its function is as follows. Acts as a glycogen-targeting subunit for PP1 and regulates its activity. Activates glycogen synthase, reduces glycogen phosphorylase activity and limits glycogen breakdown. In Clarias batrachus (Walking catfish), this protein is Protein phosphatase 1 regulatory subunit 3C.